A 442-amino-acid chain; its full sequence is MHYCVLRTFLLLHLVPVALSLSTCSTLDMDQFMRKRIEAIRGQILSKLKLTSPPEDYPEPDEVPPEVISIYNSTRDLLQEKASRRAAACERERSDEEYYAKEVYKIDMPSHFPSETVCPVVTTSSGSVGSFCSIQSQVLCGYLDAIPPTFYRPYFRIVRFDVSTMEKNASNLVKAEFRVFRLQNPKARVAEQRIELYQILKSKDLTSPTQRYIDSKVVKTRAEGEWLSFDVTDAVHEWLHHKDRNLGFKISLHCPCCTFIPSNNYIIPNKSQELEARFAGIDGTSTYASGDQKTIKSTRKKSSGKTPHLLLMLLPSYRLESQQSSRRRKRALDAAYCFRNVQDNCCLRPLYIDFKRDLGWKWIHEPKGYNANFCAGACPYLWSSDTQHTKVLSLYNTINPEASASPCCVSQDLEPLTILYYIGNTPKIEQLSNMIVKSCKCS.

The first 20 residues, 1 to 20 (MHYCVLRTFLLLHLVPVALS), serve as a signal peptide directing secretion. 3 N-linked (GlcNAc...) asparagine glycosylation sites follow: N72, N168, and N269. Cystine bridges form between C337-C346, C345-C408, C374-C439, and C378-C441.

This sequence belongs to the TGF-beta family. As to quaternary structure, interacts with the serine proteases, HTRA1 and HTRA3. Interacts with ASPN. Interacts with MFAP5. In terms of assembly, interacts with Transforming growth factor beta-2 (TGF-beta-2) chain; interaction is non-covalent and maintains (TGF-beta-2) in a latent state. Interacts with LRRC32/GARP; leading to regulate activation of TGF-beta-2. Interacts with NREP; the interaction results in a decrease in TGFB2 autoinduction. Transforming growth factor beta-2: Homodimer; disulfide-linked. Transforming growth factor beta-2: Interacts with TGF-beta receptors (TGFBR1 and TGFBR2), leading to signal transduction. The precursor proprotein is cleaved in the Golgi apparatus to form Transforming growth factor beta-2 (TGF-beta-2) and Latency-associated peptide (LAP) chains, which remain non-covalently linked, rendering TGF-beta-2 inactive. As to expression, expressed in cardiomyocytes. In terms of tissue distribution, expressed in the aorta, primary bronchus, uterus, heart, skeletal muscle, sciatic nerve and spinal cord but not in the intestine.

It is found in the secreted. It localises to the extracellular space. Its subcellular location is the extracellular matrix. Its function is as follows. Precursor of the Latency-associated peptide (LAP) and Transforming growth factor beta-2 (TGF-beta-2) chains, which constitute the regulatory and active subunit of TGF-beta-2, respectively. Required to maintain the Transforming growth factor beta-2 (TGF-beta-2) chain in a latent state during storage in extracellular matrix. Associates non-covalently with TGF-beta-2 and regulates its activation via interaction with 'milieu molecules', such as LTBP1 and LRRC32/GARP, that control activation of TGF-beta-2. In terms of biological role, multifunctional protein that regulates various processes such as angiogenesis and heart development. Activation into mature form follows different steps: following cleavage of the proprotein in the Golgi apparatus, Latency-associated peptide (LAP) and Transforming growth factor beta-2 (TGF-beta-2) chains remain non-covalently linked rendering TGF-beta-2 inactive during storage in extracellular matrix. At the same time, LAP chain interacts with 'milieu molecules', such as LTBP1 and LRRC32/GARP, that control activation of TGF-beta-2 and maintain it in a latent state during storage in extracellular milieus. Once activated following release of LAP, TGF-beta-2 acts by binding to TGF-beta receptors (TGFBR1 and TGFBR2), which transduce signal. The polypeptide is Transforming growth factor beta-2 proprotein (Tgfb2) (Rattus norvegicus (Rat)).